A 113-amino-acid polypeptide reads, in one-letter code: Mitochondrial import inner membrane translocase subunit TIM14 (113 aa).

The Mitochondrial intermembrane portion of the chain corresponds to 1–4 (MATP). A helical transmembrane segment spans residues 5-22 (IIVGATIAGIAYSSRFLI). Residues 23–113 (RVIQRAKSKQ…RNVLSSKNSN (91 aa)) lie on the Mitochondrial matrix side of the membrane. Positions 59 to 113 (EAANILGLKEESTKEEIKIRHKLLMIKNHPDKGGSSYLATKINEARNVLSSKNSN) constitute a J domain.

Belongs to the TIM14 family. Interacts with PHB2; the interaction associates DNAJC19 with the prohibitin complex. Interacts with TIMM16/PAM16. May be a component of the PAM complex at least composed of a mitochondrial HSP70 protein, GRPEL1 or GRPEL2, TIMM44, TIMM16/PAM16 and TIMM14/DNAJC19.

It localises to the mitochondrion inner membrane. Functionally, mitochondrial co-chaperone which forms a complex with prohibitins to regulate cardiolipin remodeling. May be a component of the PAM complex, a complex required for the translocation of transit peptide-containing proteins from the inner membrane into the mitochondrial matrix in an ATP-dependent manner. May act as a co-chaperone that stimulate the ATP-dependent activity. The protein is Mitochondrial import inner membrane translocase subunit TIM14 (dnajc19) of Dictyostelium discoideum (Social amoeba).